Reading from the N-terminus, the 211-residue chain is MANAGLQLLGFILASLGWIGSIVSTALPQWKIYSYAGDNIVTAQAIYEGLWMSCVSQSTGQIQCKVFDSLLNLNSTLQATRALMVIGILLGLIAIFVSTIGMKCMRCLEDDEVQKMWMAVIGGIIFVISGLATLVATAWYGNRIVQEFYDPMTPVNARYEFGQALFTGWAAASLCLLGGALLSCSCPRKTTSYPTPRPYPKPTPSSGKDYV.

The Cytoplasmic portion of the chain corresponds to 1-7 (MANAGLQ). The helical transmembrane segment at 8–28 (LLGFILASLGWIGSIVSTALP) threads the bilayer. The Extracellular segment spans residues 29-81 (QWKIYSYAGDNIVTAQAIYEGLWMSCVSQSTGQIQCKVFDSLLNLNSTLQATR). The cysteines at positions 54 and 64 are disulfide-linked. Residues 82–102 (ALMVIGILLGLIAIFVSTIGM) form a helical membrane-spanning segment. Residues 103-115 (KCMRCLEDDEVQK) lie on the Cytoplasmic side of the membrane. A helical transmembrane segment spans residues 116-136 (MWMAVIGGIIFVISGLATLVA). The Extracellular portion of the chain corresponds to 137 to 163 (TAWYGNRIVQEFYDPMTPVNARYEFGQ). Residues 164–184 (ALFTGWAAASLCLLGGALLSC) form a helical membrane-spanning segment. Over 185–211 (SCPRKTTSYPTPRPYPKPTPSSGKDYV) the chain is Cytoplasmic. Residues 190-211 (TTSYPTPRPYPKPTPSSGKDYV) are disordered. The segment at 210–211 (YV) is interactions with TJP1, TJP2, TJP3 and PATJ.

The protein belongs to the claudin family. Can form homo- and heteropolymers with other CLDN. Homopolymers interact with CLDN3, but not CLDN2, homopolymers. Directly interacts with TJP1/ZO-1, TJP2/ZO-2 and TJP3/ZO-3. Interacts with MPDZ and PATJ. Interacts with OCLN, CD81, CLDN4, CLDN6 and CLDN9. Detected in epididymis (at protein level). Detected in testis and epididymis.

The protein localises to the cell junction. It localises to the tight junction. It is found in the cell membrane. The protein resides in the basolateral cell membrane. Its function is as follows. Claudins function as major constituents of the tight junction complexes that regulate the permeability of epithelia. While some claudin family members play essential roles in the formation of impermeable barriers, others mediate the permeability to ions and small molecules. Often, several claudin family members are coexpressed and interact with each other, and this determines the overall permeability. CLDN1 is required to prevent the paracellular diffusion of small molecules through tight junctions in the epidermis and is required for the normal barrier function of the skin. Required for normal water homeostasis and to prevent excessive water loss through the skin, probably via an indirect effect on the expression levels of other proteins, since CLDN1 itself seems to be dispensable for water barrier formation in keratinocyte tight junctions. The chain is Claudin-1 (Cldn1) from Rattus norvegicus (Rat).